A 161-amino-acid chain; its full sequence is Nucleoside diphosphate kinase (161 aa).

Residues Lys12, Phe60, Arg88, Thr94, and Arg105 each contribute to the ATP site. Residue His121 is the Pros-phosphohistidine intermediate of the active site.

This sequence belongs to the NDK family. Requires Mg(2+) as cofactor.

It localises to the cytoplasm. The catalysed reaction is a 2'-deoxyribonucleoside 5'-diphosphate + ATP = a 2'-deoxyribonucleoside 5'-triphosphate + ADP. It catalyses the reaction a ribonucleoside 5'-diphosphate + ATP = a ribonucleoside 5'-triphosphate + ADP. Functionally, major role in the synthesis of nucleoside triphosphates other than ATP. The ATP gamma phosphate is transferred to the NDP beta phosphate via a ping-pong mechanism, using a phosphorylated active-site intermediate. This is Nucleoside diphosphate kinase from Pyrococcus furiosus (strain ATCC 43587 / DSM 3638 / JCM 8422 / Vc1).